We begin with the raw amino-acid sequence, 400 residues long: Phosphoglycerate kinase (400 aa).

Residues 21–23 (DFN), R37, 60–63 (HFGR), R119, and R152 contribute to the substrate site. Residues K205, G296, E327, and 353 to 356 (GGDT) contribute to the ATP site.

It belongs to the phosphoglycerate kinase family. In terms of assembly, monomer.

It is found in the cytoplasm. The catalysed reaction is (2R)-3-phosphoglycerate + ATP = (2R)-3-phospho-glyceroyl phosphate + ADP. Its pathway is carbohydrate degradation; glycolysis; pyruvate from D-glyceraldehyde 3-phosphate: step 2/5. This Aliarcobacter butzleri (strain RM4018) (Arcobacter butzleri) protein is Phosphoglycerate kinase.